A 363-amino-acid chain; its full sequence is Peptide chain release factor 1 (363 aa).

Gln237 is subject to N5-methylglutamine. A disordered region spans residues 281-302 (QQAEDEKSHAEEQTIRRSLVAS). A compositionally biased stretch (basic and acidic residues) spans 282–295 (QAEDEKSHAEEQTI).

The protein belongs to the prokaryotic/mitochondrial release factor family. Post-translationally, methylated by PrmC. Methylation increases the termination efficiency of RF1.

It is found in the cytoplasm. In terms of biological role, peptide chain release factor 1 directs the termination of translation in response to the peptide chain termination codons UAG and UAA. This is Peptide chain release factor 1 from Psychromonas ingrahamii (strain DSM 17664 / CCUG 51855 / 37).